We begin with the raw amino-acid sequence, 217 residues long: MNLVFLGPPGAGKGTQANLLTRTYEVPQISTGEILRAAVKSKTPMGVKAKEYMDQGALVPDSVVVGIVEERLASPDCASGFILDGFPRTVAQADALKQVLGALGKQIEHVVSFEVDKGVLLERIVGRRVCRACGRAFHVKFDPPLVDGVCDACGGELYQRDDDREDTMRRRLEVYDEQTAPLKSYYEGERLLRKVNALEPIEDVQRQIVKLVESCNG.

10 to 15 (GAGKGT) provides a ligand contact to ATP. The segment at 30–59 (STGEILRAAVKSKTPMGVKAKEYMDQGALV) is NMP. AMP contacts are provided by residues Thr-31, Arg-36, 57 to 59 (ALV), 85 to 88 (GFPR), and Gln-92. Positions 126 to 163 (GRRVCRACGRAFHVKFDPPLVDGVCDACGGELYQRDDD) are LID. An ATP-binding site is contributed by Arg-127. Cys-130, Cys-133, Cys-150, and Cys-153 together coordinate Zn(2+). Residues Arg-160 and Arg-171 each coordinate AMP. Glu-199 provides a ligand contact to ATP.

The protein belongs to the adenylate kinase family. In terms of assembly, monomer.

Its subcellular location is the cytoplasm. It carries out the reaction AMP + ATP = 2 ADP. It participates in purine metabolism; AMP biosynthesis via salvage pathway; AMP from ADP: step 1/1. Its function is as follows. Catalyzes the reversible transfer of the terminal phosphate group between ATP and AMP. Plays an important role in cellular energy homeostasis and in adenine nucleotide metabolism. This is Adenylate kinase from Geobacter sulfurreducens (strain ATCC 51573 / DSM 12127 / PCA).